A 1087-amino-acid polypeptide reads, in one-letter code: Exportin-7 (1087 aa).

A2 carries the post-translational modification N-acetylalanine. An Importin N-terminal domain is found at 30–96; that stretch reads AEKALVEFTN…RNYVLNYLAT (67 aa). The residue at position 570 (S570) is a Phosphoserine.

Belongs to the exportin family. In terms of assembly, binds to nucleoporins. Found in a complex with XPO7, EIF4A1, ARHGAP1, VPS26A, VPS29, VPS35 and SFN. Interacts with ARHGAP1 and SFN. Interacts with Ran and cargo proteins in a GTP-dependent manner.

The protein localises to the cytoplasm. It localises to the nucleus. It is found in the nuclear pore complex. Its function is as follows. Mediates the nuclear export of proteins (cargos) with broad substrate specificity. In the nucleus binds cooperatively to its cargo and to the GTPase Ran in its active GTP-bound form. Docking of this trimeric complex to the nuclear pore complex (NPC) is mediated through binding to nucleoporins. Upon transit of a nuclear export complex into the cytoplasm, disassembling of the complex and hydrolysis of Ran-GTP to Ran-GDP (induced by RANBP1 and RANGAP1, respectively) cause release of the cargo from the export receptor. XPO7 then return to the nuclear compartment and mediate another round of transport. The directionality of nuclear export is thought to be conferred by an asymmetric distribution of the GTP- and GDP-bound forms of Ran between the cytoplasm and nucleus. This is Exportin-7 (XPO7) from Pongo abelii (Sumatran orangutan).